Consider the following 356-residue polypeptide: Tyrosine recombinase XerS (356 aa).

Residues 16–121 (IMPWYVLDYY…ALSSLYKYLT (106 aa)) enclose the Core-binding (CB) domain. In terms of domain architecture, Tyr recombinase spans 169 to 354 (AFLDYVDKEY…VNDEQKNALD (186 aa)). Catalysis depends on residues Arg-210, Lys-234, His-306, Arg-309, and His-332. The active-site O-(3'-phospho-DNA)-tyrosine intermediate is the Tyr-341.

It belongs to the 'phage' integrase family. XerS subfamily.

It is found in the cytoplasm. FtsK is required for recombination. In terms of biological role, site-specific tyrosine recombinase, which acts by catalyzing the cutting and rejoining of the recombining DNA molecules. Essential to convert dimers of the bacterial chromosome into monomers to permit their segregation at cell division. The polypeptide is Tyrosine recombinase XerS (Streptococcus equi subsp. zooepidemicus (strain H70)).